We begin with the raw amino-acid sequence, 514 residues long: 2,3-bisphosphoglycerate-independent phosphoglycerate mutase (514 aa).

Mn(2+)-binding residues include Asp-14 and Ser-64. Ser-64 (phosphoserine intermediate) is an active-site residue. Residues His-125, 155–156 (RD), Arg-187, Arg-193, 263–266 (RADR), and Lys-336 contribute to the substrate site. Positions 403, 407, 444, 445, and 463 each coordinate Mn(2+).

The protein belongs to the BPG-independent phosphoglycerate mutase family. In terms of assembly, monomer. Mn(2+) is required as a cofactor.

It carries out the reaction (2R)-2-phosphoglycerate = (2R)-3-phosphoglycerate. The protein operates within carbohydrate degradation; glycolysis; pyruvate from D-glyceraldehyde 3-phosphate: step 3/5. Its function is as follows. Catalyzes the interconversion of 2-phosphoglycerate and 3-phosphoglycerate. The sequence is that of 2,3-bisphosphoglycerate-independent phosphoglycerate mutase from Shewanella baltica (strain OS195).